Here is a 336-residue protein sequence, read N- to C-terminus: Phospho-N-acetylmuramoyl-pentapeptide-transferase (336 aa).

A run of 10 helical transmembrane segments spans residues 3-23 (LSIM…PRFI), 52-72 (MGGT…SIIL), 79-99 (NLGA…IGFL), 123-143 (LIAG…SAIN), 144-164 (IFGF…FWVV), 175-195 (GIDG…GIIA), 201-221 (FDIL…FVFN), 227-247 (VFMG…ISIA), 255-275 (LFIG…VAYF), and 315-335 (VDAF…AILY).

The protein belongs to the glycosyltransferase 4 family. MraY subfamily. The cofactor is Mg(2+).

It localises to the cell membrane. The enzyme catalyses UDP-N-acetyl-alpha-D-muramoyl-L-alanyl-gamma-D-glutamyl-L-lysyl-D-alanyl-D-alanine + di-trans,octa-cis-undecaprenyl phosphate = Mur2Ac(oyl-L-Ala-gamma-D-Glu-L-Lys-D-Ala-D-Ala)-di-trans,octa-cis-undecaprenyl diphosphate + UMP. The protein operates within cell wall biogenesis; peptidoglycan biosynthesis. Functionally, catalyzes the initial step of the lipid cycle reactions in the biosynthesis of the cell wall peptidoglycan: transfers peptidoglycan precursor phospho-MurNAc-pentapeptide from UDP-MurNAc-pentapeptide onto the lipid carrier undecaprenyl phosphate, yielding undecaprenyl-pyrophosphoryl-MurNAc-pentapeptide, known as lipid I. The sequence is that of Phospho-N-acetylmuramoyl-pentapeptide-transferase from Streptococcus agalactiae serotype Ia (strain ATCC 27591 / A909 / CDC SS700).